The chain runs to 804 residues: Probable protein phosphatase 2C 18 (804 aa).

Residues 19 to 39 (DASGPVLFWCVLIIFAVPDAI) form a helical membrane-spanning segment. A PPM-type phosphatase domain is found at 129 to 434 (KYIVSSMQGL…ENTTVILVQF (306 aa)). Asp165, Gly166, Gln384, and Glu425 together coordinate Mn(2+). 4 disordered regions span residues 460 to 509 (STSA…GGSA), 564 to 599 (DEVE…LNAS), 623 to 653 (PLQG…DDDV), and 675 to 804 (VDST…EGSP). Residues 468–499 (GSDSDTSATSDEGVDDTATAGTTTTGYEAGSS) are compositionally biased toward low complexity. Polar residues predominate over residues 628–637 (DVSSTSTNPN). A compositionally biased stretch (low complexity) spans 638-647 (TATDTGSGSR). Residues 713 to 734 (LVNNDTTVADNNASGVADSTTV) are compositionally biased toward polar residues. The span at 776-789 (DATATATASASAAV) shows a compositional bias: low complexity. The segment covering 790 to 804 (ADDEGTAPDDSEGSP) has biased composition (acidic residues).

This sequence belongs to the PP2C family. Requires Mg(2+) as cofactor. Mn(2+) serves as cofactor.

The protein resides in the membrane. The enzyme catalyses O-phospho-L-seryl-[protein] + H2O = L-seryl-[protein] + phosphate. The catalysed reaction is O-phospho-L-threonyl-[protein] + H2O = L-threonyl-[protein] + phosphate. The chain is Probable protein phosphatase 2C 18 from Oryza sativa subsp. japonica (Rice).